Reading from the N-terminus, the 206-residue chain is Dehydration-responsive element-binding protein 2D (206 aa).

The segment at 13–40 (ANKKQRTVQASSRKGCMRGKGGPDNASC) is disordered. The AP2/ERF DNA-binding region spans 41-98 (TYKGVRQRTWGKWVAEIREPNRGARLWLGTFDTSREAALAYDSAARKLYGPEAHLNLP). The segment at 102–139 (RSYPKTASSPASQTTPSSNTGGKSSSDSESPCSSNEMS) is disordered. Low complexity predominate over residues 107–139 (TASSPASQTTPSSNTGGKSSSDSESPCSSNEMS).

Belongs to the AP2/ERF transcription factor family. ERF subfamily.

The protein localises to the nucleus. In terms of biological role, putative transcriptional activator that binds specifically to the DNA sequence 5'-[AG]CCGAC-3'. Binding to the C-repeat/DRE element mediates high salinity-inducible transcription. In Arabidopsis thaliana (Mouse-ear cress), this protein is Dehydration-responsive element-binding protein 2D (DREB2D).